We begin with the raw amino-acid sequence, 208 residues long: Large ribosomal subunit protein uL4 (208 aa).

Residues 44–85 (RQGTKKTKTRAEVRGGGKKPWRQKGTGRARQGSIRAPHWRGG) form a disordered region. Residues 59 to 70 (GGKKPWRQKGTG) show a composition bias toward basic residues.

The protein belongs to the universal ribosomal protein uL4 family. Part of the 50S ribosomal subunit.

Its function is as follows. One of the primary rRNA binding proteins, this protein initially binds near the 5'-end of the 23S rRNA. It is important during the early stages of 50S assembly. It makes multiple contacts with different domains of the 23S rRNA in the assembled 50S subunit and ribosome. Functionally, forms part of the polypeptide exit tunnel. The chain is Large ribosomal subunit protein uL4 from Mesoplasma florum (strain ATCC 33453 / NBRC 100688 / NCTC 11704 / L1) (Acholeplasma florum).